Here is a 325-residue protein sequence, read N- to C-terminus: Putative aryl-alcohol dehydrogenase C750.01 (325 aa).

This sequence belongs to the aldo/keto reductase family. Aldo/keto reductase 2 subfamily.

The protein is Putative aryl-alcohol dehydrogenase C750.01 of Schizosaccharomyces pombe (strain 972 / ATCC 24843) (Fission yeast).